The primary structure comprises 141 residues: Hemoglobin subunit alpha (141 aa).

The region spanning Val1–Arg141 is the Globin domain. At Ser3 the chain carries Phosphoserine. N6-succinyllysine is present on Lys7. Thr8 is subject to Phosphothreonine. Lys11 carries the post-translational modification N6-succinyllysine. Tyr24 is modified (phosphotyrosine). Ser35 bears the Phosphoserine mark. At Lys40 the chain carries N6-succinyllysine. Ser49 carries the phosphoserine modification. His58 serves as a coordination point for O2. Position 87 (His87) interacts with heme b. Ser102 is modified (phosphoserine). Thr108 bears the Phosphothreonine mark. Ser124 bears the Phosphoserine mark. 2 positions are modified to phosphothreonine: Thr134 and Thr137. Ser138 is modified (phosphoserine).

Belongs to the globin family. In terms of assembly, heterotetramer of two alpha chains and two beta chains. As to expression, red blood cells.

Functionally, involved in oxygen transport from the lung to the various peripheral tissues. Its function is as follows. Hemopressin acts as an antagonist peptide of the cannabinoid receptor CNR1. Hemopressin-binding efficiently blocks cannabinoid receptor CNR1 and subsequent signaling. In Rhinoceros unicornis (Greater Indian rhinoceros), this protein is Hemoglobin subunit alpha (HBA).